A 163-amino-acid polypeptide reads, in one-letter code: Olfactory marker protein (163 aa).

Ala2 is subject to N-acetylalanine.

It belongs to the olfactory marker protein family. In terms of assembly, interacts with BEX1 and BEX2. Uniquely associated with mature olfactory receptor neurons.

It is found in the cytoplasm. May act as a modulator of the olfactory signal-transduction cascade. The chain is Olfactory marker protein (Omp) from Mus musculus (Mouse).